Here is a 106-residue protein sequence, read N- to C-terminus: Guanyl-specific ribonuclease Th1 (106 aa).

Cystine bridges form between Cys5–Cys103 and Cys23–Cys84. The active site involves His39. Glu58 acts as the Proton acceptor in catalysis. The active-site Proton donor is His92.

The protein belongs to the ribonuclease N1/T1 family.

It carries out the reaction [RNA] containing guanosine + H2O = an [RNA fragment]-3'-guanosine-3'-phosphate + a 5'-hydroxy-ribonucleotide-3'-[RNA fragment].. This chain is Guanyl-specific ribonuclease Th1, found in Trichoderma harzianum (Hypocrea lixii).